The following is a 367-amino-acid chain: UDP-N-acetylglucosamine--N-acetylmuramyl-(pentapeptide) pyrophosphoryl-undecaprenol N-acetylglucosamine transferase (367 aa).

UDP-N-acetyl-alpha-D-glucosamine is bound by residues 15 to 17 (TGG), Asn-126, Arg-169, Ser-197, and Gln-298.

The protein belongs to the glycosyltransferase 28 family. MurG subfamily.

The protein resides in the cell inner membrane. It catalyses the reaction di-trans,octa-cis-undecaprenyl diphospho-N-acetyl-alpha-D-muramoyl-L-alanyl-D-glutamyl-meso-2,6-diaminopimeloyl-D-alanyl-D-alanine + UDP-N-acetyl-alpha-D-glucosamine = di-trans,octa-cis-undecaprenyl diphospho-[N-acetyl-alpha-D-glucosaminyl-(1-&gt;4)]-N-acetyl-alpha-D-muramoyl-L-alanyl-D-glutamyl-meso-2,6-diaminopimeloyl-D-alanyl-D-alanine + UDP + H(+). Its pathway is cell wall biogenesis; peptidoglycan biosynthesis. In terms of biological role, cell wall formation. Catalyzes the transfer of a GlcNAc subunit on undecaprenyl-pyrophosphoryl-MurNAc-pentapeptide (lipid intermediate I) to form undecaprenyl-pyrophosphoryl-MurNAc-(pentapeptide)GlcNAc (lipid intermediate II). The polypeptide is UDP-N-acetylglucosamine--N-acetylmuramyl-(pentapeptide) pyrophosphoryl-undecaprenol N-acetylglucosamine transferase (Bradyrhizobium sp. (strain ORS 278)).